Here is a 395-residue protein sequence, read N- to C-terminus: Ribonuclease D (395 aa).

A 3'-5' exonuclease domain is found at 14 to 181; the sequence is LITKSEDLAA…VYETLRDRLE (168 aa). Residues 219–300 enclose the HRDC domain; that stretch reads NRRYLGLLRA…AEARGLPDAD (82 aa).

It belongs to the RNase D family. It depends on a divalent metal cation as a cofactor.

Its subcellular location is the cytoplasm. It catalyses the reaction Exonucleolytic cleavage that removes extra residues from the 3'-terminus of tRNA to produce 5'-mononucleotides.. Its function is as follows. Exonuclease involved in the 3' processing of various precursor tRNAs. Initiates hydrolysis at the 3'-terminus of an RNA molecule and releases 5'-mononucleotides. This chain is Ribonuclease D, found in Granulibacter bethesdensis (strain ATCC BAA-1260 / CGDNIH1).